The following is a 1504-amino-acid chain: DNA polymerase zeta catalytic subunit (1504 aa).

Positions 1398, 1401, 1414, and 1417 each coordinate Zn(2+). The CysA-type zinc finger occupies 1398–1417; sequence CCNCGEELTKICSLQLCDDC. Residues C1446, C1449, C1468, and C1473 each coordinate [4Fe-4S] cluster. Positions 1446-1473 match the CysB motif motif; that stretch reads CRTCSYRYTSDAGIENDHIASKCNSYDC.

The protein belongs to the DNA polymerase type-B family. As to quaternary structure, forms DNA polymerase zeta with REV7. [4Fe-4S] cluster is required as a cofactor.

The protein resides in the mitochondrion. It is found in the nucleus. The catalysed reaction is DNA(n) + a 2'-deoxyribonucleoside 5'-triphosphate = DNA(n+1) + diphosphate. In terms of biological role, nonessential DNA polymerase. Required for DNA damage induced mutagenesis. Involved in DNA repair, mitochondrial DNA repair and translesion synthesis. Translesion synthesis in S.cerevisiae may use a specialized DNA polymerase that is not required for other DNA replicative processes. Has a role in the bypass of abasic (AP) sites. Highly inefficient in incorporating nucleotides opposite the AP site, but efficiently extends from nucleotides, particularly an A, inserted opposite the lesion. The sequence is that of DNA polymerase zeta catalytic subunit (REV3) from Saccharomyces cerevisiae (strain ATCC 204508 / S288c) (Baker's yeast).